A 121-amino-acid polypeptide reads, in one-letter code: Large ribosomal subunit protein uL22c (121 aa).

It belongs to the universal ribosomal protein uL22 family. Part of the 50S ribosomal subunit.

Its subcellular location is the plastid. The protein localises to the chloroplast. Functionally, this protein binds specifically to 23S rRNA. Its function is as follows. The globular domain of the protein is located near the polypeptide exit tunnel on the outside of the subunit, while an extended beta-hairpin is found that lines the wall of the exit tunnel in the center of the 70S ribosome. The chain is Large ribosomal subunit protein uL22c (rpl22) from Lemna minor (Common duckweed).